Consider the following 30-residue polypeptide: rRNA N-glycosylase (30 aa).

The protein belongs to the ribosome-inactivating protein family. Type 1 RIP subfamily. Expressed in seeds.

It carries out the reaction Endohydrolysis of the N-glycosidic bond at one specific adenosine on the 28S rRNA.. Its function is as follows. Exhibits N-glycosylase activity. Catalyzes the release of one adenine from a ribosome. Acts as a ribosome-inactivating protein and inhibits protein synthesis in a rabbit-reticulocyte lysate system and in various cell lines (in vitro). The chain is rRNA N-glycosylase from Saponaria ocymoides (Rock soapwort).